Reading from the N-terminus, the 507-residue chain is Prolyl carboxy peptidase like protein 5 (507 aa).

Residues 1–16 (MNIFISLAILIATTHC) form the signal peptide. Residue Asn-125 is glycosylated (N-linked (GlcNAc...) asparagine). Residue Ser-172 is the Charge relay system of the active site. N-linked (GlcNAc...) asparagine glycosylation is found at Asn-332 and Asn-407. Residues Asp-439 and His-466 each act as charge relay system in the active site.

This sequence belongs to the peptidase S28 family.

The sequence is that of Prolyl carboxy peptidase like protein 5 from Caenorhabditis elegans.